The chain runs to 411 residues: Tyrosine--tRNA ligase (411 aa).

Y33 is an L-tyrosine binding site. Residues 38–47 (PTAESLHLGN) carry the 'HIGH' region motif. L-tyrosine-binding residues include Y160 and Q164. The 'KMSKS' region motif lies at 222–226 (KIGKS). K225 serves as a coordination point for ATP. An S4 RNA-binding domain is found at 347–411 (SVIETLIKNK…KKQVILFKTV (65 aa)).

It belongs to the class-I aminoacyl-tRNA synthetase family. TyrS type 1 subfamily. As to quaternary structure, homodimer.

Its subcellular location is the cytoplasm. It carries out the reaction tRNA(Tyr) + L-tyrosine + ATP = L-tyrosyl-tRNA(Tyr) + AMP + diphosphate + H(+). Catalyzes the attachment of tyrosine to tRNA(Tyr) in a two-step reaction: tyrosine is first activated by ATP to form Tyr-AMP and then transferred to the acceptor end of tRNA(Tyr). The polypeptide is Tyrosine--tRNA ligase (Mycoplasmopsis agalactiae (strain NCTC 10123 / CIP 59.7 / PG2) (Mycoplasma agalactiae)).